Here is a 338-residue protein sequence, read N- to C-terminus: Anthocyanidin reductase ((2S)-flavan-3-ol-forming) (338 aa).

NADP(+) is bound by residues 18 to 21 (TGFV), Lys48, 87 to 90 (VATP), and Tyr168.

Belongs to the NAD(P)-dependent epimerase/dehydratase family. Dihydroflavonol-4-reductase subfamily. In terms of tissue distribution, expressed in seeds, grape skins, flowers and leaves.

The enzyme catalyses a (2S,3R)-flavan-3-ol + 2 NADP(+) = an anthocyanidin with a 3-hydroxy group + 2 NADPH + 2 H(+). The catalysed reaction is a (2S,3S)-flavan-3-ol + 2 NADP(+) = an anthocyanidin with a 3-hydroxy group + 2 NADPH + 2 H(+). It functions in the pathway secondary metabolite biosynthesis; flavonoid biosynthesis. Inhibited at NaCl concentrations higher than 200 mM. Produces the terminal flavan-3-ol monomers required for the formation of proanthocyanidins or condensed tannins in leaves and flowers, as well as in the skin and seeds of developing berries. Behaves as a reductase and as a C-3 epimerase. Catalyzes the double reduction of anthocyanidins, producing a mixture of (2S,3S)- and (2S,3R)-flavan-3-ols. The enzyme catalyzes sequential hydride transfers to C-2 and C-4, respectively and epimerization at C-3 is achieved by tautomerization that occurs between the two hydride transfers. Converts cyanidin, pelargonidin and delphinidin into catechin and epicatechin, afzelechin and epiafzelechin, and gallocatechin and epigallocatechin respectively. The polypeptide is Anthocyanidin reductase ((2S)-flavan-3-ol-forming) (Vitis vinifera (Grape)).